The sequence spans 542 residues: Prolyl 3-hydroxylase OGFOD1 (542 aa).

In terms of domain architecture, Fe2OG dioxygenase spans 134–239 (DLESTIDMSC…RLSISGWFHG (106 aa)). Residues His-155 and Asp-157 each coordinate Fe cation. Tyr-169 contacts 2-oxoglutarate. His-218 serves as a coordination point for Fe cation. Arg-230 contacts 2-oxoglutarate. Positions 371 to 435 (SEDEPEDKKE…AKKESSVPTC (65 aa)) are disordered. Residues 395-417 (SHSSSEPENSWAATSDSSLQSEG) are compositionally biased toward polar residues.

The protein belongs to the TPA1 family. As to quaternary structure, monomer. Requires Fe(2+) as cofactor. L-ascorbate serves as cofactor.

The protein localises to the cytoplasm. The protein resides in the nucleus. The catalysed reaction is [ribosomal protein uS12]-L-proline + 2-oxoglutarate + O2 = [ribosomal protein uS12]-(3S)-3-hydroxy-L-proline + succinate + CO2. Prolyl 3-hydroxylase that catalyzes 3-hydroxylation of 'Pro-62' of small ribosomal subunit uS12 (RPS23), thereby regulating protein translation termination efficiency. Involved in stress granule formation. This chain is Prolyl 3-hydroxylase OGFOD1 (OGFOD1), found in Bos taurus (Bovine).